A 98-amino-acid chain; its full sequence is NADH-ubiquinone oxidoreductase chain 4L (98 aa).

3 consecutive transmembrane segments (helical) span residues 1-21 (MSMVYINIFLAFILSLMGMLV), 29-49 (SLLCLEGMMLSLFVMMSVTIL), and 61-81 (IVLLVFAACEAALGLSLLVMV).

This sequence belongs to the complex I subunit 4L family. Core subunit of respiratory chain NADH dehydrogenase (Complex I) which is composed of 45 different subunits.

The protein resides in the mitochondrion inner membrane. It catalyses the reaction a ubiquinone + NADH + 5 H(+)(in) = a ubiquinol + NAD(+) + 4 H(+)(out). In terms of biological role, core subunit of the mitochondrial membrane respiratory chain NADH dehydrogenase (Complex I) which catalyzes electron transfer from NADH through the respiratory chain, using ubiquinone as an electron acceptor. Part of the enzyme membrane arm which is embedded in the lipid bilayer and involved in proton translocation. In Canis latrans (Coyote), this protein is NADH-ubiquinone oxidoreductase chain 4L (MT-ND4L).